We begin with the raw amino-acid sequence, 276 residues long: Nickel import system permease protein NikC (276 aa).

The next 5 helical transmembrane spans lie at 10–30 (LIFFVFGAFIFVMIVLQFFVS), 73–93 (LFVTVLTLIAIVVIGVTLGLF), 108–128 (FIDVGLSIPEFIIVIALASFF), 186–206 (IIPAIIVLMVVDFGKIILYIS), and 238–258 (IMLIAPASVIAITILIFNLTG). The ABC transmembrane type-1 domain maps to 69 to 258 (ARSTLFVTVL…ITILIFNLTG (190 aa)).

This sequence belongs to the binding-protein-dependent transport system permease family. OppBC subfamily. As to quaternary structure, the complex is composed of two ATP-binding proteins (NikD and NikE), two transmembrane proteins (NikB and NikC) and a solute-binding protein (NikA).

The protein resides in the cell membrane. In terms of biological role, part of the ABC transporter complex NikABCDE (Opp2) involved in nickel import. Probably responsible for the translocation of the substrate across the membrane. The chain is Nickel import system permease protein NikC from Staphylococcus aureus (strain bovine RF122 / ET3-1).